An 861-amino-acid polypeptide reads, in one-letter code: Linoleate 9S-lipoxygenase 2 (861 aa).

The region spanning 29–160 (NALDFTDLAG…RYKSDRIFFV (132 aa)) is the PLAT domain. One can recognise a Lipoxygenase domain in the interval 163–861 (PYLPSKTPEL…GKGIPNSVSI (699 aa)). Residues 212–246 (EGKENVRTTLGGSAEYPYPRRGRTGRPPTRTDPKS) are disordered. Residues His-522, His-527, His-713, Asn-717, and Ile-861 each coordinate Fe cation.

The protein belongs to the lipoxygenase family. In terms of assembly, monomer. It depends on Fe cation as a cofactor. As to expression, highly expressed in tubers and roots. Detected in flower buds and leaves.

It is found in the cytoplasm. The enzyme catalyses (9Z,12Z)-octadecadienoate + O2 = (9S)-hydroperoxy-(10E,12Z)-octadecadienoate. Its pathway is lipid metabolism; oxylipin biosynthesis. Functionally, plant lipoxygenases may be involved in a number of diverse aspects of plant physiology including growth and development, pest resistance, and senescence or responses to wounding. Catalyzes the hydroperoxidation of lipids containing a cis,cis-1,4-pentadiene structure. Linoleic acid is the preferred substrate, but is also active with linolenic and arachidonic acids. The sequence is that of Linoleate 9S-lipoxygenase 2 (LOX1.2) from Solanum tuberosum (Potato).